Reading from the N-terminus, the 409-residue chain is Magnesium-protoporphyrin IX monomethyl ester [oxidative] cyclase, chloroplastic (409 aa).

Disordered regions lie at residues 1–23 and 36–60; these read MAAE…SNPS and RMSA…TKKE. The transit peptide at 1–36 directs the protein to the chloroplast; sequence MAAEMALVKPISKFSSPKLSNPSKFLSGRRFSTVIR. Residues 13 to 23 are compositionally biased toward polar residues; it reads KFSSPKLSNPS.

This sequence belongs to the AcsF family. In terms of assembly, part of the FLU-containing chloroplast membrane complex composed of FLU, CRD1, PORB, PORC, CHLP and HEMA1. Interacts with YCF54 in chloroplasts. Fe cation serves as cofactor.

It localises to the plastid. It is found in the chloroplast inner membrane. The protein localises to the chloroplast thylakoid membrane. It catalyses the reaction Mg-protoporphyrin IX 13-monomethyl ester + 3 NADPH + 3 O2 + 2 H(+) = 3,8-divinyl protochlorophyllide a + 3 NADP(+) + 5 H2O. It functions in the pathway porphyrin-containing compound metabolism; chlorophyll biosynthesis. Its function is as follows. Catalytic component of the MgProto monomethylester (MgProtoME) cyclase complex that catalyzes the formation of the isocyclic ring in chlorophyll biosynthesis. Mediates the cyclase reaction, which results in the formation of divinylprotochlorophyllide (Pchlide) characteristic of all chlorophylls from magnesium-protoporphyrin IX 13-monomethyl ester (MgPMME). This Arabidopsis thaliana (Mouse-ear cress) protein is Magnesium-protoporphyrin IX monomethyl ester [oxidative] cyclase, chloroplastic.